A 124-amino-acid chain; its full sequence is Small ribosomal subunit protein bS6 (124 aa).

The tract at residues 99–124 is disordered; sequence PLPAPRIVPGSEPEPVQQQEAAAVEA. Positions 111 to 124 are enriched in low complexity; sequence PEPVQQQEAAAVEA.

Belongs to the bacterial ribosomal protein bS6 family.

Binds together with bS18 to 16S ribosomal RNA. The protein is Small ribosomal subunit protein bS6 of Prochlorococcus marinus (strain MIT 9313).